Reading from the N-terminus, the 113-residue chain is Protein translation factor SUI1 homolog (113 aa).

It belongs to the SUI1 family.

Functionally, probably involved in translation. The chain is Protein translation factor SUI1 homolog from Salix bakko (Japanese willow).